A 504-amino-acid chain; its full sequence is Histidine ammonia-lyase (504 aa).

The segment at residues 142-144 is a cross-link (5-imidazolinone (Ala-Gly)); the sequence is ASG. Residue S143 is modified to 2,3-didehydroalanine (Ser).

This sequence belongs to the PAL/histidase family. Post-translationally, contains an active site 4-methylidene-imidazol-5-one (MIO), which is formed autocatalytically by cyclization and dehydration of residues Ala-Ser-Gly.

It is found in the cytoplasm. The catalysed reaction is L-histidine = trans-urocanate + NH4(+). It functions in the pathway amino-acid degradation; L-histidine degradation into L-glutamate; N-formimidoyl-L-glutamate from L-histidine: step 1/3. This chain is Histidine ammonia-lyase, found in Staphylococcus aureus (strain bovine RF122 / ET3-1).